We begin with the raw amino-acid sequence, 478 residues long: JmjC domain-containing histone demethylation protein 1 (478 aa).

The segment at 5 to 68 (SESCPLCKVH…IYHCPECVPK (64 aa)) adopts a PHD-type zinc-finger fold. The JmjC domain maps to 217–383 (SDVAKLGVDF…MQLKINEIER (167 aa)). Substrate is bound at residue Thr-266. His-269 and Asp-271 together coordinate Fe cation. Lys-286 contributes to the substrate binding site. His-351 provides a ligand contact to Fe cation.

The protein belongs to the JHDM1 histone demethylase family. The cofactor is Fe(2+).

Its subcellular location is the nucleus. The catalysed reaction is N(6),N(6)-dimethyl-L-lysyl(36)-[histone H3] + 2 2-oxoglutarate + 2 O2 = L-lysyl(36)-[histone H3] + 2 formaldehyde + 2 succinate + 2 CO2. Functionally, histone demethylase that specifically demethylates 'Lys-36' of histone H3, thereby playing a central role in histone code. In Candida albicans (strain SC5314 / ATCC MYA-2876) (Yeast), this protein is JmjC domain-containing histone demethylation protein 1 (JHD1).